The sequence spans 445 residues: Phosphoglucosamine mutase (445 aa).

The Phosphoserine intermediate role is filled by Ser-102. Residues Ser-102, Asp-241, Asp-243, and Asp-245 each coordinate Mg(2+). Ser-102 is subject to Phosphoserine.

It belongs to the phosphohexose mutase family. Requires Mg(2+) as cofactor. Activated by phosphorylation.

It catalyses the reaction alpha-D-glucosamine 1-phosphate = D-glucosamine 6-phosphate. Its function is as follows. Catalyzes the conversion of glucosamine-6-phosphate to glucosamine-1-phosphate. The protein is Phosphoglucosamine mutase of Rhodococcus jostii (strain RHA1).